The chain runs to 101 residues: Large ribosomal subunit protein uL24 (101 aa).

The protein belongs to the universal ribosomal protein uL24 family. Part of the 50S ribosomal subunit.

One of two assembly initiator proteins, it binds directly to the 5'-end of the 23S rRNA, where it nucleates assembly of the 50S subunit. Functionally, one of the proteins that surrounds the polypeptide exit tunnel on the outside of the subunit. This is Large ribosomal subunit protein uL24 from Streptococcus thermophilus (strain CNRZ 1066).